A 111-amino-acid chain; its full sequence is Ig heavy chain V-III region HPC76 (111 aa).

One can recognise an Ig-like domain in the interval 1 to 110 (ESGGGLVQPG…WGQGTTLTVS (110 aa)).

This Mus musculus (Mouse) protein is Ig heavy chain V-III region HPC76.